The primary structure comprises 2552 residues: Protein TIC 214 (2552 aa).

6 helical membrane passes run 15-35 (LIFG…SYLF), 54-74 (LSYG…YLPF), 78-98 (LSNF…QFFW), 119-136 (TLAF…YTFF), 154-174 (FKIL…LICI), and 243-263 (ILAT…PIPF). The disordered stretch occupies residues 304–325 (EEQKKDEKSADEEKKRAVEEEN). Positions 305–322 (EQKKDEKSADEEKKRAVE) are enriched in basic and acidic residues. The next 3 helical transmembrane spans lie at 362-382 (TLYT…AFLF), 423-443 (PFLV…SVYI), and 452-472 (FLFN…HFFF). The segment at 2045 to 2077 (MKAEEQKKIDEEYEEKKEKRKKEQEEQGKAFDE) is disordered. Positions 2416-2511 (RRRRQLRIVN…IKKKLMRLRF (96 aa)) form a coiled coil.

The protein belongs to the TIC214 family. In terms of assembly, part of the Tic complex.

The protein localises to the plastid. It localises to the chloroplast inner membrane. Functionally, involved in protein precursor import into chloroplasts. May be part of an intermediate translocation complex acting as a protein-conducting channel at the inner envelope. The chain is Protein TIC 214 from Pelargonium hortorum (Common geranium).